Here is a 249-residue protein sequence, read N- to C-terminus: Probable aquaporin TIP-type (249 aa).

The next 2 helical transmembrane spans lie at 22–42 and 56–76; these read AGLA…GSGI and AGLI…VSVG. The NPA 1 motif lies at 85-87; that stretch reads NPA. 3 helical membrane passes run 103-123, 137-157, and 169-189; these read IVYI…LVFV, VGVG…VYTV, and IGII…LVGG. The NPA 2 signature appears at 197-199; sequence NPA. The chain crosses the membrane as a helical span at residues 217 to 237; that stretch reads YWAGPLIGGGIAGLVYEVLFI.

It belongs to the MIP/aquaporin (TC 1.A.8) family. TIP (TC 1.A.8.10) subfamily. In terms of tissue distribution, expression is highest in root tips, with slightly lower levels of hybridizing mRNA in stems, and whole roots, and much lower levels in nodules and leaves.

The protein localises to the membrane. In terms of biological role, aquaporins facilitate the transport of water and small neutral solutes across cell membranes. This chain is Probable aquaporin TIP-type (MCP1), found in Medicago sativa (Alfalfa).